Here is a 184-residue protein sequence, read N- to C-terminus: Tumor necrosis factor alpha-induced protein 8-like protein 2 (184 aa).

Serine 3 bears the Phosphoserine mark.

The protein belongs to the TNFAIP8 family. TNFAIP8L2 subfamily. In terms of assembly, may interact with CASP8; however, such result is unclear since could not reproduce the interaction with CASP8. Interacts with RAC1. In terms of processing, phosphorylated by TAK1/MAP3K7; this phosphorylation triggers association with BTRC and subsequent ubiquitination and degradation. Post-translationally, ubiquitinated in a BTRC-depdent manner; leading to degradation mediated through the proteasome pathway.

The protein resides in the cytoplasm. It is found in the nucleus. The protein localises to the lysosome. Functionally, acts as a negative regulator of innate and adaptive immunity by maintaining immune homeostasis. Plays a regulatory role in the Toll-like signaling pathway by determining the strength of LPS-induced signaling and gene expression. Inhibits TCR-mediated T-cell activation and negatively regulate T-cell function to prevent hyperresponsiveness. Also inhibits autolysosome formation via negatively modulating MTOR activation by interacting with RAC1 and promoting the disassociation of the RAC1-MTOR complex. Plays an essential role in NK-cell biology by acting as a checkpoint and displaying an expression pattern correlating with NK-cell maturation process and by negatively regulating NK-cell maturation and antitumor immunity. Mechanistically, suppresses IL-15-triggered mTOR activity in NK-cells. The protein is Tumor necrosis factor alpha-induced protein 8-like protein 2 (TNFAIP8L2) of Oryctolagus cuniculus (Rabbit).